Reading from the N-terminus, the 187-residue chain is GTP cyclohydrolase 1 (187 aa).

Cys81, His84, and Cys152 together coordinate Zn(2+).

It belongs to the GTP cyclohydrolase I family. In terms of assembly, toroid-shaped homodecamer, composed of two pentamers of five dimers.

It carries out the reaction GTP + H2O = 7,8-dihydroneopterin 3'-triphosphate + formate + H(+). It participates in cofactor biosynthesis; 7,8-dihydroneopterin triphosphate biosynthesis; 7,8-dihydroneopterin triphosphate from GTP: step 1/1. The sequence is that of GTP cyclohydrolase 1 from Pyrobaculum aerophilum (strain ATCC 51768 / DSM 7523 / JCM 9630 / CIP 104966 / NBRC 100827 / IM2).